A 93-amino-acid polypeptide reads, in one-letter code: DNA-directed RNA polymerase subunit omega (93 aa).

This sequence belongs to the RNA polymerase subunit omega family. In terms of assembly, the RNAP catalytic core consists of 2 alpha, 1 beta, 1 beta' and 1 omega subunit. When a sigma factor is associated with the core the holoenzyme is formed, which can initiate transcription.

The catalysed reaction is RNA(n) + a ribonucleoside 5'-triphosphate = RNA(n+1) + diphosphate. Its function is as follows. Promotes RNA polymerase assembly. Latches the N- and C-terminal regions of the beta' subunit thereby facilitating its interaction with the beta and alpha subunits. In Corynebacterium urealyticum (strain ATCC 43042 / DSM 7109), this protein is DNA-directed RNA polymerase subunit omega.